The primary structure comprises 147 residues: Bis(5'-nucleosyl)-tetraphosphatase [asymmetrical] (147 aa).

A2 is modified (N-acetylalanine). The region spanning 2-139 is the Nudix hydrolase domain; sequence ALRACGLIIF…EMKATLQEGH (138 aa). A Nudix box motif is present at residues 43–64; it reads GHVDPGENDLETALRETQEETG.

It belongs to the Nudix hydrolase family. It depends on a divalent metal cation as a cofactor.

It catalyses the reaction P(1),P(4)-bis(5'-guanosyl) tetraphosphate + H2O = GMP + GTP + 2 H(+). The enzyme catalyses a 5'-end CoA-ribonucleoside in mRNA + H2O = a 5'-end phospho-adenosine-phospho-ribonucleoside in mRNA + (R)-4'-phosphopantetheine + 2 H(+). The catalysed reaction is a 5'-end FAD-phospho-ribonucleoside in mRNA + H2O = a 5'-end phospho-adenosine-phospho-ribonucleoside in mRNA + FMN + 2 H(+). Functionally, catalyzes the asymmetric hydrolysis of diadenosine 5',5'''-P1,P4-tetraphosphate (Ap4A) to yield AMP and ATP. Exhibits decapping activity towards FAD-capped RNAs and dpCoA-capped RNAs in vitro. In Rattus norvegicus (Rat), this protein is Bis(5'-nucleosyl)-tetraphosphatase [asymmetrical] (Nudt2).